A 230-amino-acid chain; its full sequence is Small ribosomal subunit protein uS3 (230 aa).

One can recognise a KH type-2 domain in the interval 39 to 107 (VRNYLRQKLA…PVHVNIEEIR (69 aa)). Residues 210–230 (SSKPEHESKQRKAGRRNAAAN) form a disordered region.

The protein belongs to the universal ribosomal protein uS3 family. As to quaternary structure, part of the 30S ribosomal subunit. Forms a tight complex with proteins S10 and S14.

Its function is as follows. Binds the lower part of the 30S subunit head. Binds mRNA in the 70S ribosome, positioning it for translation. The polypeptide is Small ribosomal subunit protein uS3 (Neisseria meningitidis serogroup C (strain 053442)).